Reading from the N-terminus, the 651-residue chain is E3 SUMO-protein ligase PIAS1 (651 aa).

Position 2 is an N-acetylalanine (Ala2). Positions 2–200 are required for interaction with MSX1; the sequence is ADSAELKQMV…KCDFTVQVQL (199 aa). An SAP domain is found at 11 to 45; that stretch reads VMSLRVSELQVLLGYAGRNKHGRKHELLTKALHLL. The short motif at 19-23 is the LXXLL motif element; sequence LQVLL. Glycyl lysine isopeptide (Lys-Gly) (interchain with G-Cter in SUMO2) cross-links involve residues Lys40 and Lys46. The short motif at 56-64 is the Nuclear localization signal element; it reads KIKELYRRR. Positions 124–288 constitute a PINIT domain; that stretch reads HLTSALHPVH…SMAVYLVKQL (165 aa). Glycyl lysine isopeptide (Lys-Gly) (interchain with G-Cter in SUMO2) cross-links involve residues Lys137 and Lys238. The segment at 320 to 405 adopts an SP-RING-type zinc-finger fold; the sequence is PDSEIATTSL…LKYCTDCDEI (86 aa). Zn(2+)-binding residues include Cys351, His353, Cys374, and Cys377. The Nuclear localization signal signature appears at 368–380; it reads KKPTWVCPVCDKK. Residue Lys453 forms a Glycyl lysine isopeptide (Lys-Gly) (interchain with G-Cter in SUMO2) linkage. The SUMO1-binding stretch occupies residues 462–473; the sequence is LTIDSSSDEEEE. The segment at 465–511 is disordered; the sequence is DSSSDEEEEEPSAKRTCPSLSPTSPLNNKGILSLPHQASPVSRTPSL. Phosphoserine occurs at positions 467, 468, 483, and 485. The segment covering 482 to 491 has biased composition (polar residues); sequence PSLSPTSPLN. Thr487 is modified (phosphothreonine). Residue Ser488 is modified to Phosphoserine. Residue Lys493 forms a Glycyl lysine isopeptide (Lys-Gly) (interchain with G-Cter in SUMO2) linkage. Residues Ser503, Ser510, and Ser522 each carry the phosphoserine modification. Repeat copies occupy residues 520–523 and 557–560. The tract at residues 520–615 is 4 X 4 AA repeats of N-T-S-L; the sequence is NTSLIQDYRH…GSSSGSNSSL (96 aa). The stretch at 598–601 is one 3; approximate repeat; sequence STSL. Low complexity predominate over residues 599-621; that stretch reads TSLPTTNGSSSGSNSSLVSSNSL. Residues 599 to 632 are disordered; that stretch reads TSLPTTNGSSSGSNSSLVSSNSLRESHSHTVTNR. The stretch at 612–615 is one 4; approximate repeat; that stretch reads NSSL.

The protein belongs to the PIAS family. Interacts with NCOA2 and AR. Interacts with NR2C1; the interaction promotes its sumoylation. Interacts with DDX21, CSRP2, AXIN1, JUN, UBE2I, SUMO1, SATB2, PLAG1, TP53 and STAT1 (dimer), following IFNA1-stimulation. Interacts with SP3 (preferentially when SUMO-modified). Interacts with KLF8; the interaction results in SUMO ligation and repression of KLF8 transcriptional activity and of its cell cycle progression into G(1) phase. Interacts with CHUK/IKKA; this interaction induces PIAS1 phosphorylation. Interacts with PTK2/FAK1; the interaction promotes its sumoylation. Interacts with DDX5. Interacts with PML. Interacts with MTA1. Interacts with SUMO1P1/SUMO5. Interacts with PRDM1/Blimp-1. Interacts (via N-terminus) with MSX1 (via C-terminus); the interaction is required for the localization of both proteins to the nuclear periphery and specific binding of MSX1 to the core enhancer region in target gene promoters. In terms of assembly, (Microbial infection) Interacts with ebolavirus VP35; this interaction mediates the sumoylation of IRF7 and contributes to the viral inhibition of IFN-type I production. Post-translationally, sumoylated. As to expression, expressed in numerous tissues with highest level in testis.

It is found in the nucleus. The protein localises to the nucleus speckle. It localises to the PML body. The protein resides in the cytoplasm. Its subcellular location is the cytoskeleton. It participates in protein modification; protein sumoylation. Functions as an E3-type small ubiquitin-like modifier (SUMO) ligase, stabilizing the interaction between UBE2I and the substrate, and as a SUMO-tethering factor. Catalyzes sumoylation of various proteins, such as CEBPB, MRE11, MTA1, PTK2 and PML. Plays a crucial role as a transcriptional coregulation in various cellular pathways, including the STAT pathway, the p53 pathway and the steroid hormone signaling pathway. In vitro, binds A/T-rich DNA. The effects of this transcriptional coregulation, transactivation or silencing, may vary depending upon the biological context. Mediates sumoylation of MRE11, stabilizing MRE11 on chromatin during end resection. Sumoylates PML (at 'Lys-65' and 'Lys-160') and PML-RAR and promotes their ubiquitin-mediated degradation. PIAS1-mediated sumoylation of PML promotes its interaction with CSNK2A1/CK2 which in turn promotes PML phosphorylation and degradation. Enhances the sumoylation of MTA1 and may participate in its paralog-selective sumoylation. Plays a dynamic role in adipogenesis by promoting the SUMOylation and degradation of CEBPB. Mediates the nuclear mobility and localization of MSX1 to the nuclear periphery, whereby MSX1 is brought into the proximity of target myoblast differentiation factor genes. Also required for the binding of MSX1 to the core enhancer region in target gene promoter regions, independent of its sumoylation activity. Capable of binding to the core enhancer region TAAT box in the MYOD1 gene promoter. Its function is as follows. (Microbial infection) Restricts Epstein-Barr virus (EBV) lytic replication by acting as an inhibitor for transcription factors involved in lytic gene expression. The virus can use apoptotic caspases to antagonize PIAS1-mediated restriction and express its lytic genes. The sequence is that of E3 SUMO-protein ligase PIAS1 (PIAS1) from Homo sapiens (Human).